Here is a 61-residue protein sequence, read N- to C-terminus: Large ribosomal subunit protein uL30 (61 aa).

It belongs to the universal ribosomal protein uL30 family. In terms of assembly, part of the 50S ribosomal subunit.

The sequence is that of Large ribosomal subunit protein uL30 from Corynebacterium glutamicum (strain ATCC 13032 / DSM 20300 / JCM 1318 / BCRC 11384 / CCUG 27702 / LMG 3730 / NBRC 12168 / NCIMB 10025 / NRRL B-2784 / 534).